Here is a 307-residue protein sequence, read N- to C-terminus: Lipoyl synthase (307 aa).

Residues Cys55, Cys60, Cys66, Cys81, Cys85, Cys88, and Ser292 each coordinate [4Fe-4S] cluster. Residues Trp67–Ser281 form the Radical SAM core domain.

Belongs to the radical SAM superfamily. Lipoyl synthase family. It depends on [4Fe-4S] cluster as a cofactor.

Its subcellular location is the cytoplasm. The enzyme catalyses [[Fe-S] cluster scaffold protein carrying a second [4Fe-4S](2+) cluster] + N(6)-octanoyl-L-lysyl-[protein] + 2 oxidized [2Fe-2S]-[ferredoxin] + 2 S-adenosyl-L-methionine + 4 H(+) = [[Fe-S] cluster scaffold protein] + N(6)-[(R)-dihydrolipoyl]-L-lysyl-[protein] + 4 Fe(3+) + 2 hydrogen sulfide + 2 5'-deoxyadenosine + 2 L-methionine + 2 reduced [2Fe-2S]-[ferredoxin]. It functions in the pathway protein modification; protein lipoylation via endogenous pathway; protein N(6)-(lipoyl)lysine from octanoyl-[acyl-carrier-protein]: step 2/2. Its function is as follows. Catalyzes the radical-mediated insertion of two sulfur atoms into the C-6 and C-8 positions of the octanoyl moiety bound to the lipoyl domains of lipoate-dependent enzymes, thereby converting the octanoylated domains into lipoylated derivatives. The protein is Lipoyl synthase of Mycobacterium avium (strain 104).